The primary structure comprises 161 residues: Leucine-rich colipase-like protein 1 (161 aa).

The signal sequence occupies residues 1–25 (MSVSVWPPLLLLLLLLLLWAVPTFQ).

This is Leucine-rich colipase-like protein 1 (Lrcol1) from Mus musculus (Mouse).